Here is a 400-residue protein sequence, read N- to C-terminus: CinA-like protein (400 aa).

It belongs to the CinA family.

This chain is CinA-like protein, found in Escherichia coli O9:H4 (strain HS).